A 437-amino-acid polypeptide reads, in one-letter code: Aspartic proteinase nepenthesin-1 (437 aa).

Positions 1–24 are cleaved as a signal peptide; the sequence is MASSLYSFLLALSIVYIFVAPTHS. Residues 25–78 constitute a propeptide, activation peptide; the sequence is TSRTALNHRHEAKVTGFQIMLEHVDSGKNLTKFQLLERAIERGSRRLQRLEAML. N53 and N98 each carry an N-linked (GlcNAc...) asparagine glycan. The 336-residue stretch at 95-430 folds into the Peptidase A1 domain; the sequence is YLMNLSIGTP…DTGNSVVSFA (336 aa). Residue D113 is part of the active site. 6 disulfide bridges follow: C123–C126, C129–C203, C150–C168, C155–C163, C240–C434, and C354–C395. A glycan (N-linked (GlcNAc...) asparagine) is linked at N131. N-linked (GlcNAc...) asparagine glycans are attached at residues N198, N267, and N307. D315 is a catalytic residue. Residue N345 is glycosylated (N-linked (GlcNAc...) asparagine).

This sequence belongs to the peptidase A1 family.

The protein localises to the secreted. The enzyme catalyses Similar to pepsin, but also cleaves on either side of Asp and at Lys-|-Arg.. Inhibited by pepstatin and by diazoacetyl-D,L-norleucine methyl ester (DAN) in the presence of Cu(2+) ions. Extracellular proteinase found in the pitcher fluid of carnivorous plants. Digest prey for nitrogen uptake. The chain is Aspartic proteinase nepenthesin-1 (nep1) from Nepenthes gracilis (Slender pitcher plant).